A 71-amino-acid polypeptide reads, in one-letter code: uncharacterized protein (71 aa).

This is an uncharacterized protein from Escherichia coli (strain K12).